A 569-amino-acid chain; its full sequence is F-box/WD repeat-containing protein 5 (569 aa).

One can recognise an F-box domain in the interval 3-49 (EGGMPLLPDSLVYQIFLSLGPADVLAAGLVCRQWQAVSRDEFLWREQ). The stretch at 90–129 (EHTDQVLHLSFSHSGYQFASCSKDCTVKIWNNDLTISLLH) is one WD 1 repeat. Position 151 is a phosphoserine; by PLK4 (serine 151). A D-box motif is present at residues 308–316 (RRVFDSVLD). 2 WD repeats span residues 470–509 (TPND…CLAK) and 511–551 (RHED…RVLQ).

The protein belongs to the FBXW5 family. In terms of assembly, part of the SCF (SKP1-CUL1-F-box) E3 ubiquitin-protein ligase complex SCF(FBXW5) composed of CUL1, SKP1, RBX1 and FBXW5. Component of the DCX(FBXW5) E3 ubiquitin ligase complex, at least composed of (CUL4A or CUL4B), DDB1, FBXW5 and RBX1. Interacts with CDC20, EPS8, TSC1, TSC2 and SASS6. Interacts with TNFAIP8L1; TNFAIP8L1 competes with TSC2 to bind FBXW5 increasing TSC2 stability by preventing its ubiquitination. In terms of processing, phosphorylated at Ser-151 by PLK4 during the G1/S transition, leading to inhibit its ability to ubiquitinate SASS6. Post-translationally, ubiquitinated and degraded by the APC/C complex during mitosis and G1 phase.

It is found in the cytoplasm. The protein operates within protein modification; protein ubiquitination. Its function is as follows. Substrate recognition component of both SCF (SKP1-CUL1-F-box protein) and DCX (DDB1-CUL4-X-box) E3 ubiquitin-protein ligase complexes. Substrate recognition component of the SCF(FBXW5) E3 ubiquitin-protein ligase complex which mediates the ubiquitination and subsequent proteasomal degradation of SASS6 during S phase, leading to prevent centriole reduplication. The SCF(FBXW5) complex also mediates ubiquitination and degradation of actin-regulator EPS8 during G2 phase, leading to the transient degradation of EPS8 and subsequent cell shape changes required to allow mitotic progression. Substrate-specific adapter of the DCX(FBXW5) E3 ubiquitin-protein ligase complex which mediates the polyubiquitination and subsequent degradation of TSC2. May also act as a negative regulator of MAP3K7/TAK1 signaling in the interleukin-1B (IL1B) signaling pathway. This is F-box/WD repeat-containing protein 5 (Fbxw5) from Rattus norvegicus (Rat).